A 416-amino-acid chain; its full sequence is Serine hydroxymethyltransferase 1 (416 aa).

Residues L121 and 125-127 (GHL) each bind (6S)-5,6,7,8-tetrahydrofolate. K229 carries the post-translational modification N6-(pyridoxal phosphate)lysine. (6S)-5,6,7,8-tetrahydrofolate contacts are provided by residues E245 and 354–356 (SPF).

The protein belongs to the SHMT family. In terms of assembly, homodimer. Pyridoxal 5'-phosphate serves as cofactor.

Its subcellular location is the cytoplasm. The catalysed reaction is (6R)-5,10-methylene-5,6,7,8-tetrahydrofolate + glycine + H2O = (6S)-5,6,7,8-tetrahydrofolate + L-serine. The protein operates within one-carbon metabolism; tetrahydrofolate interconversion. Its pathway is amino-acid biosynthesis; glycine biosynthesis; glycine from L-serine: step 1/1. Catalyzes the reversible interconversion of serine and glycine with tetrahydrofolate (THF) serving as the one-carbon carrier. This reaction serves as the major source of one-carbon groups required for the biosynthesis of purines, thymidylate, methionine, and other important biomolecules. Also exhibits THF-independent aldolase activity toward beta-hydroxyamino acids, producing glycine and aldehydes, via a retro-aldol mechanism. The chain is Serine hydroxymethyltransferase 1 from Vibrio vulnificus (strain CMCP6).